The chain runs to 307 residues: Aspartate carbamoyltransferase catalytic subunit (307 aa).

Arg54 and Thr55 together coordinate carbamoyl phosphate. Residue Lys83 participates in L-aspartate binding. Positions 104, 132, and 135 each coordinate carbamoyl phosphate. 2 residues coordinate L-aspartate: Arg165 and Arg228. Residues Leu267 and Pro268 each coordinate carbamoyl phosphate.

It belongs to the aspartate/ornithine carbamoyltransferase superfamily. ATCase family. In terms of assembly, heterododecamer (2C3:3R2) of six catalytic PyrB chains organized as two trimers (C3), and six regulatory PyrI chains organized as three dimers (R2).

The enzyme catalyses carbamoyl phosphate + L-aspartate = N-carbamoyl-L-aspartate + phosphate + H(+). Its pathway is pyrimidine metabolism; UMP biosynthesis via de novo pathway; (S)-dihydroorotate from bicarbonate: step 2/3. Its function is as follows. Catalyzes the condensation of carbamoyl phosphate and aspartate to form carbamoyl aspartate and inorganic phosphate, the committed step in the de novo pyrimidine nucleotide biosynthesis pathway. In Clostridium botulinum (strain Eklund 17B / Type B), this protein is Aspartate carbamoyltransferase catalytic subunit.